Reading from the N-terminus, the 283-residue chain is Diaminopimelate epimerase (283 aa).

3 residues coordinate substrate: asparagine 13, glutamine 45, and asparagine 65. Catalysis depends on cysteine 74, which acts as the Proton donor. Residues glycine 75–asparagine 76, asparagine 156, asparagine 190, and glutamate 208–arginine 209 contribute to the substrate site. Cysteine 217 serves as the catalytic Proton acceptor. A substrate-binding site is contributed by glycine 218–serine 219.

The protein belongs to the diaminopimelate epimerase family. In terms of assembly, homodimer.

It is found in the cytoplasm. It carries out the reaction (2S,6S)-2,6-diaminopimelate = meso-2,6-diaminopimelate. The protein operates within amino-acid biosynthesis; L-lysine biosynthesis via DAP pathway; DL-2,6-diaminopimelate from LL-2,6-diaminopimelate: step 1/1. Catalyzes the stereoinversion of LL-2,6-diaminopimelate (L,L-DAP) to meso-diaminopimelate (meso-DAP), a precursor of L-lysine and an essential component of the bacterial peptidoglycan. In Bartonella quintana (strain Toulouse) (Rochalimaea quintana), this protein is Diaminopimelate epimerase.